Consider the following 181-residue polypeptide: Cytidylate kinase (181 aa).

7–15 serves as a coordination point for ATP; the sequence is GPPGSGTTS.

Belongs to the cytidylate kinase family. Type 2 subfamily.

The protein localises to the cytoplasm. It catalyses the reaction CMP + ATP = CDP + ADP. The enzyme catalyses dCMP + ATP = dCDP + ADP. This is Cytidylate kinase from Methanoculleus marisnigri (strain ATCC 35101 / DSM 1498 / JR1).